A 133-amino-acid polypeptide reads, in one-letter code: MVMLDTLANALATIQNAEMRAKSEALIWPASKLIINVLRVMQREGYIGEFEYIDDGRWGKIKVQLLGRINKTGVIKPRFPVKLRDLERMPHWLRKYLPAYNIGILILSTPHGVLSHKEAIAKKTGGVLLAYVY.

Belongs to the universal ribosomal protein uS8 family. Part of the 30S ribosomal subunit.

One of the primary rRNA binding proteins, it binds directly to 16S rRNA central domain where it helps coordinate assembly of the platform of the 30S subunit. This is Small ribosomal subunit protein uS8 from Staphylothermus marinus (strain ATCC 43588 / DSM 3639 / JCM 9404 / F1).